Consider the following 69-residue polypeptide: UPF0435 protein SH1076 (69 aa).

The protein belongs to the UPF0435 family.

In Staphylococcus haemolyticus (strain JCSC1435), this protein is UPF0435 protein SH1076.